The primary structure comprises 185 residues: Adenylyl-sulfate kinase (185 aa).

13–20 (GLSGAGKS) contributes to the ATP binding site. Ser-86 functions as the Phosphoserine intermediate in the catalytic mechanism.

The protein belongs to the APS kinase family.

It carries out the reaction adenosine 5'-phosphosulfate + ATP = 3'-phosphoadenylyl sulfate + ADP + H(+). It participates in sulfur metabolism; hydrogen sulfide biosynthesis; sulfite from sulfate: step 2/3. Functionally, catalyzes the synthesis of activated sulfate. The sequence is that of Adenylyl-sulfate kinase from Myxococcus xanthus (strain DK1622).